The following is a 181-amino-acid chain: Inner membrane-spanning protein YciB (181 aa).

Transmembrane regions (helical) follow at residues 10 to 30 (LVIFFAVYKFFDIYIASGALI), 50 to 70 (MHLITFAMVTVFGTLTLVFHD), 72 to 92 (AFIKWKVTIIYALFALALGIS), 118 to 138 (ITWYWVIFFATCGLVNIYVAF), and 148 to 168 (FKVFGLTALTLVNTVITVFYL).

Belongs to the YciB family.

The protein localises to the cell inner membrane. Plays a role in cell envelope biogenesis, maintenance of cell envelope integrity and membrane homeostasis. The sequence is that of Inner membrane-spanning protein YciB from Shewanella putrefaciens (strain CN-32 / ATCC BAA-453).